The sequence spans 180 residues: MGLTISSLFSRLFGKKQMRILMVGLDAAGKTTILYKLKLGEIVTTIPTIGFNVETVEYKNICFTVWDVGGQDKIRPLWRHYFQNTQGLIFVVDSNDRERIQEGAEELQKMLQEDELRDAVLLLFANKQDLPNAMAISEMTDKLGLQSLRNRTWYVQATCATQGTGLYEGLDWLSNELSKR.

Glycine 2 is lipidated: N-myristoyl glycine. Residues 24 to 31 (GLDAAGKT), 67 to 71 (DVGGQ), and 126 to 129 (NKQD) contribute to the GTP site. A Phosphoserine modification is found at serine 147.

It belongs to the small GTPase superfamily. Arf family. As to quaternary structure, forms a complex containing RAB11A, ASAP1, RAB3IP, RAP11FIP3 and ARF4; the complex promotes preciliary trafficking; the complex binds to RHO in photoreceptor cells and promotes RHO ciliary transport.

It is found in the golgi apparatus. The protein resides in the membrane. Functionally, GTP-binding protein that functions as an allosteric activator of the cholera toxin catalytic subunit, an ADP-ribosyltransferase. Involved in protein trafficking; may modulate vesicle budding and uncoating within the Golgi apparatus. Part of the ciliary targeting complex containing Rab11, ASAP1, Rabin8/RAB3IP, RAB11FIP3 and ARF4, which direct preciliary vesicle trafficking to mother centriole and ciliogenesis initiation. The protein is ADP-ribosylation factor 4 (ARF4) of Bos taurus (Bovine).